The primary structure comprises 382 residues: Galactokinase (382 aa).

34–37 (EHTD) contributes to the substrate binding site. Residue 124–130 (GAGLSSS) participates in ATP binding. Residues Ser130 and Glu162 each contribute to the Mg(2+) site. Residue Asp174 is the Proton acceptor of the active site. Tyr223 serves as a coordination point for substrate.

Belongs to the GHMP kinase family. GalK subfamily.

The protein localises to the cytoplasm. The catalysed reaction is alpha-D-galactose + ATP = alpha-D-galactose 1-phosphate + ADP + H(+). It participates in carbohydrate metabolism; galactose metabolism. In terms of biological role, catalyzes the transfer of the gamma-phosphate of ATP to D-galactose to form alpha-D-galactose-1-phosphate (Gal-1-P). The protein is Galactokinase of Salmonella choleraesuis (strain SC-B67).